We begin with the raw amino-acid sequence, 297 residues long: 4-hydroxy-tetrahydrodipicolinate synthase (297 aa).

T50 is a pyruvate binding site. Y138 acts as the Proton donor/acceptor in catalysis. K166 serves as the catalytic Schiff-base intermediate with substrate. Residue I208 participates in pyruvate binding.

It belongs to the DapA family. As to quaternary structure, homotetramer; dimer of dimers.

It is found in the cytoplasm. The catalysed reaction is L-aspartate 4-semialdehyde + pyruvate = (2S,4S)-4-hydroxy-2,3,4,5-tetrahydrodipicolinate + H2O + H(+). It participates in amino-acid biosynthesis; L-lysine biosynthesis via DAP pathway; (S)-tetrahydrodipicolinate from L-aspartate: step 3/4. In terms of biological role, catalyzes the condensation of (S)-aspartate-beta-semialdehyde [(S)-ASA] and pyruvate to 4-hydroxy-tetrahydrodipicolinate (HTPA). The chain is 4-hydroxy-tetrahydrodipicolinate synthase from Desulfotalea psychrophila (strain LSv54 / DSM 12343).